The chain runs to 468 residues: Soluble pyridine nucleotide transhydrogenase (468 aa).

Residue 38–47 (ERHYNVGGGC) participates in FAD binding.

Belongs to the class-I pyridine nucleotide-disulfide oxidoreductase family. FAD is required as a cofactor.

It localises to the cytoplasm. It catalyses the reaction NAD(+) + NADPH = NADH + NADP(+). Functionally, conversion of NADPH, generated by peripheral catabolic pathways, to NADH, which can enter the respiratory chain for energy generation. This chain is Soluble pyridine nucleotide transhydrogenase, found in Pectobacterium atrosepticum (strain SCRI 1043 / ATCC BAA-672) (Erwinia carotovora subsp. atroseptica).